A 701-amino-acid chain; its full sequence is Interleukin-1 receptor accessory protein-like 1-A (701 aa).

The N-terminal stretch at 1-19 (MTALNPVLFLLCGVSVSLS) is a signal peptide. At 20-361 (LKVVSKRGSV…IGKRVELMYT (342 aa)) the chain is on the extracellular side. The region spanning 33 to 133 (TDWSVDYLKY…RNSTFCMKVS (101 aa)) is the Ig-like C2-type 1 domain. C54 and C121 are joined by a disulfide. N-linked (GlcNAc...) asparagine glycans are attached at residues N64, N125, N141, N216, N267, and N334. Ig-like C2-type domains lie at 146 to 235 (CYNS…TYLS) and 245 to 353 (PRIL…VQIG). A disulfide bond links C167 and C219. C270 and C337 are joined by a disulfide. The chain crosses the membrane as a helical span at residues 362–382 (VELAGGLGAILLLLALLLSVY). The Cytoplasmic portion of the chain corresponds to 383-701 (KCYRIELLLC…RETSISSVIW (319 aa)). One can recognise a TIR domain in the interval 407–563 (KEYDAYLSYS…RFWKQLRYTM (157 aa)). E495 is an active-site residue. The tract at residues 568 to 701 (PQQTITNHAL…RETSISSVIW (134 aa)) is required for synaptic vesicle accumulation during synaptogenesis.

The protein belongs to the interleukin-1 receptor family.

It localises to the cell membrane. The protein localises to the cytoplasm. It carries out the reaction NAD(+) + H2O = ADP-D-ribose + nicotinamide + H(+). Its function is as follows. May regulate secretion and presynaptic differentiation through inhibition of the activity of N-type voltage-gated calcium channel. During presynaptic differentiation may regulate both synaptic vesicle accumulation in axon terminals and subsequent axon terminal remodeling. This chain is Interleukin-1 receptor accessory protein-like 1-A (il1rapl1a), found in Danio rerio (Zebrafish).